The sequence spans 229 residues: UPF0128 protein aq_756 (229 aa).

This sequence belongs to the UPF0128 family.

This Aquifex aeolicus (strain VF5) protein is UPF0128 protein aq_756.